A 179-amino-acid polypeptide reads, in one-letter code: Small ribosomal subunit protein eS10x (179 aa).

Residues 90 to 179 (TLKKSAKPGG…AAAPSGSGLP (90 aa)) are disordered. The segment covering 108 to 129 (DRSRGPRHEGGDRPRFGDRDGY) has biased composition (basic and acidic residues). Residues 134 to 144 (RAGGEFGGEKG) show a composition bias toward gly residues. Over residues 145 to 156 (GAPADYQPSFQG) the composition is skewed to low complexity. The span at 157–167 (SGRGFGRGAGG) shows a compositional bias: gly residues. Residues 168–179 (YSAAAPSGSGLP) show a composition bias toward low complexity.

The protein belongs to the eukaryotic ribosomal protein eS10 family.

The protein localises to the cytoplasm. This is Small ribosomal subunit protein eS10x (RPS10C) from Arabidopsis thaliana (Mouse-ear cress).